We begin with the raw amino-acid sequence, 82 residues long: MVFLLCFFLVADVSYGINGDCELPKVVGPCRASHPRYYYNSSSKRCEKFNYGGCRGNANNFHTLEECEKVCGVRSRDSPKEN.

The first 16 residues, 1–16, serve as a signal peptide directing secretion; that stretch reads MVFLLCFFLVADVSYG. Positions 21 to 71 constitute a BPTI/Kunitz inhibitor domain; sequence CELPKVVGPCRASHPRYYYNSSSKRCEKFNYGGCRGNANNFHTLEECEKVC. 3 cysteine pairs are disulfide-bonded: C21–C71, C30–C54, and C46–C67. A propeptide spanning residues 76-82 is cleaved from the precursor; sequence RDSPKEN.

The protein belongs to the venom Kunitz-type family. Sea anemone type 2 potassium channel toxin subfamily.

The protein resides in the secreted. It localises to the nematocyst. Functionally, serine protease inhibitor that inhibits both tissue and plasma kallikreins. Has hemolytic activity. Inhibits voltage-gated potassium channels (Kv). The polypeptide is U-actitoxin-Avd3p (Anemonia viridis (Snakelocks anemone)).